A 704-amino-acid polypeptide reads, in one-letter code: MRFLSFRRLLLYHVLCLTLTEVSAHTVELNEMFGQIQSPGYPDSYPSDSEVTWNITVPEGFRVQLYFMHFNLESSYLCEYDYVKVETEDQVLATFCGRETTDTEQTPGQEVVLSPGSFMSVTFRSDFSNEERFTGFDAHYMAVDVDECKEREDEELSCDHYCHNYIGGYYCSCRFGYILHTDNRTCRVECSGNLFTQRTGTITSPDYPNPYPKSSECSYTIDLEEGFMVTLQFEDIFDIEDHPEVPCPYDYIKIKAGSKVWGPFCGEKSPEPISTQSHSIQILFRSDNSGENRGWRLSYRAAGNECPKLQPPVYGKIEPSQAVYSFKDQVLISCDTGYKVLKDNEVMDTFQIECLKDGAWSNKIPTCKIVDCGVPAVLKHGLVTFSTRNNLTTYKSEIRYSCQQPYYKMLHNTTGVYTCSAHGTWTNEVLKRSLPTCLPVCGLPKFSRKHISRIFNGRPAQKGTTPWIAMLSQLNGQPFCGGSLLGSNWVLTAAHCLHHPLDPEEPILHNSHLLSPSDFKIIMGKHWRRRSDEDEQHLHVKHIMLHPLYNPSTFENDLGLVELSESPRLNDFVMPVCLPEHPSTEGTMVIVSGWGKQFLQRLPENLMEIEIPIVNYHTCQEAYTPLGKKVTQDMICAGEKEGGKDACAGDSGGPMVTKDAERDQWYLVGVVSWGEDCGKKDRYGVYSYIYPNKDWIQRVTGVRN.

An N-terminal signal peptide occupies residues 1–24; sequence MRFLSFRRLLLYHVLCLTLTEVSA. Residues 25–143 form the CUB 1 domain; sequence HTVELNEMFG…TGFDAHYMAV (119 aa). The tract at residues 25-189 is homodimerization; the sequence is HTVELNEMFG…HTDNRTCRVE (165 aa). The segment at 25 to 189 is interaction with MBL2; it reads HTVELNEMFG…HTDNRTCRVE (165 aa). Residues 25 to 283 form an interaction with FCN2 region; the sequence is HTVELNEMFG…STQSHSIQIL (259 aa). The tract at residues 25 to 305 is interaction with MBL1; the sequence is HTVELNEMFG…RLSYRAAGNE (281 aa). Asn-54 carries N-linked (GlcNAc...) asparagine glycosylation. Glu-73, Asp-81, Asp-126, Ser-128, Asp-144, Val-145, and Glu-147 together coordinate Ca(2+). Cys-78 and Cys-96 are disulfide-bonded. One can recognise an EGF-like; calcium-binding domain in the interval 144–187; the sequence is DVDECKEREDEELSCDHYCHNYIGGYYCSCRFGYILHTDNRTCR. Cystine bridges form between Cys-148–Cys-162, Cys-158–Cys-171, Cys-173–Cys-186, and Cys-190–Cys-217. Asn-164, Tyr-165, and Gly-168 together coordinate Ca(2+). Residue Asn-164 is modified to (3R)-3-hydroxyasparagine. A glycan (N-linked (GlcNAc...) asparagine) is linked at Asn-183. The CUB 2 domain occupies 190–302; it reads CSGNLFTQRT…RGWRLSYRAA (113 aa). Ca(2+) is bound by residues Glu-240, Asp-250, Asp-287, and Ser-289. The cysteines at positions 247 and 265 are disulfide-linked. 2 consecutive Sushi domains span residues 304–369 and 370–439; these read NECP…TCKI and VDCG…TCLP. Intrachain disulfides connect Cys-306-Cys-354, Cys-334-Cys-367, Cys-372-Cys-419, Cys-402-Cys-437, Cys-441-Cys-577, and Cys-480-Cys-496. Residues Asn-390 and Asn-412 are each glycosylated (N-linked (GlcNAc...) asparagine). One can recognise a Peptidase S1 domain in the interval 454-701; that stretch reads IFNGRPAQKG…NKDWIQRVTG (248 aa). His-495 (charge relay system) is an active-site residue. The N-linked (GlcNAc...) asparagine glycan is linked to Leu-538. The Charge relay system role is filled by Asp-557. A glycan (N-linked (GlcNAc...) asparagine) is linked at Glu-604. Cystine bridges form between Cys-619-Cys-636 and Cys-647-Cys-677. Ser-651 functions as the Charge relay system in the catalytic mechanism.

It belongs to the peptidase S1 family. In terms of assembly, homodimer. Interacts with the oligomeric lectins MBL2, FCN2 and FCN3; triggers the lectin pathway of complement through activation of C3. Interacts with SERPING1. Interacts with COLEC11; probably triggers the lectin pathway of complement. The iron and 2-oxoglutarate dependent 3-hydroxylation of aspartate and asparagine is (R) stereospecific within EGF domains. In terms of processing, N-glycosylated. Some N-linked glycan are of the complex-type. Post-translationally, autoproteolytic processing of the proenzyme produces the active enzyme composed on the heavy and the light chain held together by a disulfide bond. Isoform 1 but not isoform 2 is activated through autoproteolytic processing. In terms of tissue distribution, protein of the plasma which is primarily expressed by liver.

Its subcellular location is the secreted. With respect to regulation, inhibited by SERPING1 and A2M. Functionally, functions in the lectin pathway of complement, which performs a key role in innate immunity by recognizing pathogens through patterns of sugar moieties and neutralizing them. The lectin pathway is triggered upon binding of mannan-binding lectin (MBL) and ficolins to sugar moieties which leads to activation of the associated proteases MASP1 and MASP2. Functions as an endopeptidase and may activate MASP2 or C2 or directly activate C3 the key component of complement reaction. Isoform 2 may have an inhibitory effect on the activation of the lectin pathway of complement or may cleave IGFBP5. Also plays a role in development. The chain is Mannan-binding lectin serine protease 1 (Masp1) from Rattus norvegicus (Rat).